The sequence spans 108 residues: UPF0145 protein alr2488 (108 aa).

Belongs to the UPF0145 family.

The chain is UPF0145 protein alr2488 from Nostoc sp. (strain PCC 7120 / SAG 25.82 / UTEX 2576).